A 276-amino-acid polypeptide reads, in one-letter code: Shikimate dehydrogenase (NADP(+)) (276 aa).

Shikimate is bound by residues 14–16 (SKS) and Thr61. Lys65 functions as the Proton acceptor in the catalytic mechanism. Asp77 contacts NADP(+). Residues Asn86 and Asp102 each coordinate shikimate. NADP(+)-binding positions include 127–131 (GAGGA), 151–156 (NRTPDK), and Met214. Position 216 (Tyr216) interacts with shikimate. Gly238 is an NADP(+) binding site.

The protein belongs to the shikimate dehydrogenase family. Homodimer.

The catalysed reaction is shikimate + NADP(+) = 3-dehydroshikimate + NADPH + H(+). It functions in the pathway metabolic intermediate biosynthesis; chorismate biosynthesis; chorismate from D-erythrose 4-phosphate and phosphoenolpyruvate: step 4/7. Functionally, involved in the biosynthesis of the chorismate, which leads to the biosynthesis of aromatic amino acids. Catalyzes the reversible NADPH linked reduction of 3-dehydroshikimate (DHSA) to yield shikimate (SA). The protein is Shikimate dehydrogenase (NADP(+)) of Nitrosomonas europaea (strain ATCC 19718 / CIP 103999 / KCTC 2705 / NBRC 14298).